Consider the following 174-residue polypeptide: MHCPFCQHNDTRVIDSRVSEDGTTIRRRRECEACGERFSTLETIELKLPTVVKSDGGREAFDARKLRTSFDRALQKRPVAEEQIEAAVRAVVHQLRMSGEREVGSLRVGEYVMVELRKLDHVGYVRFASVYRSFQDVADFREEIEKLERELPVGSEQLPLLEAALERAGKPGKR.

A zinc finger lies at cysteine 3–cysteine 34. The region spanning proline 49–aspartate 139 is the ATP-cone domain.

It belongs to the NrdR family. The cofactor is Zn(2+).

In terms of biological role, negatively regulates transcription of bacterial ribonucleotide reductase nrd genes and operons by binding to NrdR-boxes. The chain is Transcriptional repressor NrdR from Xanthomonas axonopodis pv. citri (strain 306).